The following is a 179-amino-acid chain: Large ribosomal subunit protein uL5 (179 aa).

It belongs to the universal ribosomal protein uL5 family. Part of the 50S ribosomal subunit; part of the 5S rRNA/L5/L18/L25 subcomplex. Contacts the 5S rRNA and the P site tRNA. Forms a bridge to the 30S subunit in the 70S ribosome.

Its function is as follows. This is one of the proteins that bind and probably mediate the attachment of the 5S RNA into the large ribosomal subunit, where it forms part of the central protuberance. In the 70S ribosome it contacts protein S13 of the 30S subunit (bridge B1b), connecting the 2 subunits; this bridge is implicated in subunit movement. Contacts the P site tRNA; the 5S rRNA and some of its associated proteins might help stabilize positioning of ribosome-bound tRNAs. This Lysinibacillus sphaericus (strain C3-41) protein is Large ribosomal subunit protein uL5.